The chain runs to 1801 residues: U3 small nucleolar RNA-associated protein 10 (1801 aa).

The stretch at 582–619 (IDFQALVPFVLVALGDVSERIRREAAAVLAALGALYKK) is one HEAT 1 repeat. 2 helical membrane-spanning segments follow: residues 945–965 (IQSGMSYLLSLALGSLLAIVN) and 1001–1021 (ALLLVAGLSVIAPELVLHSVM). HEAT repeat units follow at residues 1045–1082 (QTIDQVVPALIQSLRNQKRDVVSGTSELLLSFTAAFEH), 1252–1289 (LSLIDFLDTIEILLQRPGDELRRKVLRLLEGRLRQNPE), 1296–1334 (NRMLDFLPTLVTIVESSPDILLKHAAVACIDRITEKYGK), and 1757–1794 (ALLPEMLPYISELMEDEDENVEREVRRWVKQIEDVLGE).

This sequence belongs to the HEATR1/UTP10 family. In terms of assembly, component of the ribosomal small subunit (SSU) processome.

Its subcellular location is the nucleus. The protein resides in the nucleolus. It is found in the membrane. Its function is as follows. Involved in nucleolar processing of pre-18S ribosomal RNA. Involved in ribosome biosynthesis. This Aspergillus terreus (strain NIH 2624 / FGSC A1156) protein is U3 small nucleolar RNA-associated protein 10.